The chain runs to 226 residues: 2-C-methyl-D-erythritol 4-phosphate cytidylyltransferase (226 aa).

Belongs to the IspD/TarI cytidylyltransferase family. IspD subfamily.

The enzyme catalyses 2-C-methyl-D-erythritol 4-phosphate + CTP + H(+) = 4-CDP-2-C-methyl-D-erythritol + diphosphate. It participates in isoprenoid biosynthesis; isopentenyl diphosphate biosynthesis via DXP pathway; isopentenyl diphosphate from 1-deoxy-D-xylulose 5-phosphate: step 2/6. Catalyzes the formation of 4-diphosphocytidyl-2-C-methyl-D-erythritol from CTP and 2-C-methyl-D-erythritol 4-phosphate (MEP). The sequence is that of 2-C-methyl-D-erythritol 4-phosphate cytidylyltransferase from Haemophilus ducreyi (strain 35000HP / ATCC 700724).